Consider the following 148-residue polypeptide: NPC intracellular cholesterol transporter 2 homolog a (148 aa).

A signal peptide spans 1–16 (MLRYAVIACAALVVFA). Disulfide bonds link cysteine 24–cysteine 140, cysteine 39–cysteine 46, and cysteine 92–cysteine 99. An N-linked (GlcNAc...) asparagine glycan is attached at asparagine 51.

It belongs to the NPC2 family. In terms of tissue distribution, broadly expressed with a higher level of expression in many tissues, including midgut, salivary gland and ventral nerve cord.

The protein localises to the secreted. Its function is as follows. Functions redundantly with Npc2b in regulating sterol homeostasis and ecdysteroid biosynthesis, probably by controlling the availability of sterol substrate. The chain is NPC intracellular cholesterol transporter 2 homolog a from Drosophila melanogaster (Fruit fly).